The following is a 502-amino-acid chain: ATP synthase subunit alpha (502 aa).

Residue 169–176 (GDRQTGKT) participates in ATP binding.

It belongs to the ATPase alpha/beta chains family. F-type ATPases have 2 components, CF(1) - the catalytic core - and CF(0) - the membrane proton channel. CF(1) has five subunits: alpha(3), beta(3), gamma(1), delta(1), epsilon(1). CF(0) has three main subunits: a(1), b(2) and c(9-12). The alpha and beta chains form an alternating ring which encloses part of the gamma chain. CF(1) is attached to CF(0) by a central stalk formed by the gamma and epsilon chains, while a peripheral stalk is formed by the delta and b chains.

Its subcellular location is the cell inner membrane. The catalysed reaction is ATP + H2O + 4 H(+)(in) = ADP + phosphate + 5 H(+)(out). Functionally, produces ATP from ADP in the presence of a proton gradient across the membrane. The alpha chain is a regulatory subunit. The sequence is that of ATP synthase subunit alpha from Trichlorobacter lovleyi (strain ATCC BAA-1151 / DSM 17278 / SZ) (Geobacter lovleyi).